Here is a 78-residue protein sequence, read N- to C-terminus: Hainantoxin-XX.2 (78 aa).

Positions 1 to 23 are cleaved as a signal peptide; that stretch reads MKSATLLALSYLLIALYFLICEA. The propeptide occupies 24–47; the sequence is EHSRYEEHEILEENMGDVVNLEQR. 3 disulfide bridges follow: C49/C62, C56/C66, and C61/C77.

The protein belongs to the hainantoxin family. 20 subfamily. In terms of tissue distribution, expressed by the venom gland.

The protein localises to the secreted. Functionally, moderately inhibits Kv1.1/KCNA1 and Kv1.2/KCNA2 and weakly inhibits Kv1.3/KCNA3, and Kv2.1/KCNB1 voltage-gated potassium channels. The protein is Hainantoxin-XX.2 of Cyriopagopus hainanus (Chinese bird spider).